A 295-amino-acid chain; its full sequence is MMRILLFLATNLAVVLIASITLSLFGFNGFMAANGVDLNLNQLLVFCAVFGFAGSLFSLFISKWMAKMSTGTQIITQPRTRHEQWLLQTVEQLSRDAGIKMPEVGIFPAYEANAFATGWNKNDALVAVSQGLLERFSPDEVKAVLAHEIGHVANGDMVTLALVQGVVNTFVMFFARIIGNFVDKVIFKTENGQGIAYYITTIFAELVLGFLASAIVMWFSRKREFRADDAGARLAGTDAMIGALQRLRSEQGVPVNMPDSLTAFGINAGLKKGLAGLFMSHPPLEQRIEALRRRG.

A run of 2 helical transmembrane segments spans residues 4 to 24 (ILLFLATNLAVVLIASITLSL) and 42 to 62 (QLLVFCAVFGFAGSLFSLFIS). His147 is a Zn(2+) binding site. Residue Glu148 is part of the active site. His151 serves as a coordination point for Zn(2+). Transmembrane regions (helical) follow at residues 158-178 (VTLALVQGVVNTFVMFFARII) and 199-219 (ITTIFAELVLGFLASAIVMWF). Residue Glu224 coordinates Zn(2+).

It belongs to the peptidase M48B family. Zn(2+) serves as cofactor.

Its subcellular location is the cell inner membrane. This chain is Protease HtpX, found in Pseudomonas syringae pv. tomato (strain ATCC BAA-871 / DC3000).